We begin with the raw amino-acid sequence, 178 residues long: Adenine phosphoribosyltransferase (178 aa).

This sequence belongs to the purine/pyrimidine phosphoribosyltransferase family. Homodimer.

The protein localises to the cytoplasm. It carries out the reaction AMP + diphosphate = 5-phospho-alpha-D-ribose 1-diphosphate + adenine. The protein operates within purine metabolism; AMP biosynthesis via salvage pathway; AMP from adenine: step 1/1. Catalyzes a salvage reaction resulting in the formation of AMP, that is energically less costly than de novo synthesis. The protein is Adenine phosphoribosyltransferase of Cereibacter sphaeroides (strain KD131 / KCTC 12085) (Rhodobacter sphaeroides).